The primary structure comprises 953 residues: ALS2 C-terminal-like protein (953 aa).

MORN repeat units lie at residues 358–380 (YEGE…DGRN), 381–403 (HVGD…QASE), 409–431 (YKCH…TSEV), 432–454 (YKGY…PQAP), 459–481 (YTGH…DRGE), 483–505 (YIGM…AGVC), 506–528 (YQGT…DDSL), and 529–552 (YEGT…NGFT). One can recognise a VPS9 domain in the interval 796–942 (LFPDARLLEF…IQKEDMRLHR (147 aa)).

Homodimer. Forms a heteromeric complex with ALS2. Interacts with ALS2 and RAB5A.

The protein localises to the cytoplasm. Functionally, acts as a guanine nucleotide exchange factor (GEF) for Rab5 GTPase. Regulates the ALS2-mediated endosome dynamics. The sequence is that of ALS2 C-terminal-like protein (ALS2CL) from Bos taurus (Bovine).